A 617-amino-acid chain; its full sequence is 5-hydroxytryptamine receptor 2B (617 aa).

Topologically, residues 1–95 (MLKTVTTAMA…LLVKMIAMAV (95 aa)) are extracellular. Asparagine 31, asparagine 41, asparagine 51, and asparagine 58 each carry an N-linked (GlcNAc...) asparagine glycan. The chain crosses the membrane as a helical span at residues 96-116 (VLGLMILVTIIGNVFVIAAII). Residues 117 to 128 (LERNLQNVANYL) are Cytoplasmic-facing. The helical transmembrane segment at 129 to 149 (VASLAVADLFVACLVMPLGAV) threads the bilayer. Over 150–164 (YEISNGWILGPELCD) the chain is Extracellular. Cysteine 163 and cysteine 242 form a disulfide bridge. Residues 165–185 (IWTSCDVLCCTASILHLVAIA) traverse the membrane as a helical segment. Residues 186-205 (ADRYWTVTNIDYNNLRTPRR) lie on the Cytoplasmic side of the membrane. Residues 206-226 (VFLMIFCVWFAALIVSLAPQF) form a helical membrane-spanning segment. Over 227–256 (GWKDPDYMKRIEEQHCMVSQDVGYQIFATC) the chain is Extracellular. The helical transmembrane segment at 257–277 (CTFYVPLLVILFLYWKIYIIA) threads the bilayer. Residues 278-534 (RKRIQRRAQK…EAKRERKAAQ (257 aa)) are Cytoplasmic-facing. A disordered region spans residues 309-336 (RSKRRAERKRLEAGERTPVDGDGTGGQL). Over residues 317 to 327 (KRLEAGERTPV) the composition is skewed to basic and acidic residues. A helical membrane pass occupies residues 535-555 (TLAIITGAFVICWLPFFVMAL). Residues 556–570 (TMSLCKECEIHTAVA) lie on the Extracellular side of the membrane. Residues 571 to 591 (SLFLWLGYFNSTLNPVIYTIF) form a helical membrane-spanning segment. The Cytoplasmic segment spans residues 592–617 (NPEFRRAFKRILFGRKAAARARSAKI).

This sequence belongs to the G-protein coupled receptor 1 family.

It is found in the cell membrane. This is one of the several different receptors for 5-hydroxytryptamine (serotonin), a biogenic hormone that functions as a neurotransmitter, a hormone, and a mitogen. The activity of this receptor is mediated by G proteins which inhibit adenylate cyclase. This chain is 5-hydroxytryptamine receptor 2B (5-HT1B), found in Drosophila melanogaster (Fruit fly).